We begin with the raw amino-acid sequence, 76 residues long: Small ribosomal subunit protein bS18 (76 aa).

It belongs to the bacterial ribosomal protein bS18 family. As to quaternary structure, part of the 30S ribosomal subunit. Forms a tight heterodimer with protein bS6.

Binds as a heterodimer with protein bS6 to the central domain of the 16S rRNA, where it helps stabilize the platform of the 30S subunit. The protein is Small ribosomal subunit protein bS18 of Marinobacter nauticus (strain ATCC 700491 / DSM 11845 / VT8) (Marinobacter aquaeolei).